A 496-amino-acid polypeptide reads, in one-letter code: NADH-quinone oxidoreductase subunit N (496 aa).

A run of 13 helical transmembrane segments spans residues serine 16–isoleucine 36, cysteine 46–leucine 66, isoleucine 79–leucine 99, phenylalanine 116–phenylalanine 136, phenylalanine 166–alanine 186, leucine 208–isoleucine 228, leucine 245–methionine 267, aspartate 278–glutamine 298, methionine 304–serine 324, leucine 331–valine 351, alanine 382–tryptophan 402, isoleucine 422–phenylalanine 442, and valine 464–leucine 484.

Belongs to the complex I subunit 2 family. NDH-1 is composed of 14 different subunits. Subunits NuoA, H, J, K, L, M, N constitute the membrane sector of the complex.

Its subcellular location is the cell inner membrane. The catalysed reaction is a quinone + NADH + 5 H(+)(in) = a quinol + NAD(+) + 4 H(+)(out). Its function is as follows. NDH-1 shuttles electrons from NADH, via FMN and iron-sulfur (Fe-S) centers, to quinones in the respiratory chain. The immediate electron acceptor for the enzyme in this species is believed to be ubiquinone. Couples the redox reaction to proton translocation (for every two electrons transferred, four hydrogen ions are translocated across the cytoplasmic membrane), and thus conserves the redox energy in a proton gradient. This is NADH-quinone oxidoreductase subunit N from Campylobacter concisus (strain 13826).